Consider the following 726-residue polypeptide: MSNESKCPFKHTAGEGTSNRDWWPGQLNLKILHQHSRLSDPMAEGFDYAAEFKTLDLAAVKRDLQALMTDSQPWWPADFGHYGPLFIRMAWHSAGTYRIADGRGGAGGGQQRFAPLNSWPDNVSLDKARRLIWPIKQKYGRKISWADLIILTGNVALESMGFKTFGFAGGRQDVWEPEDNVYWGSETTWLDDQRYSGDRELENPLGAVQMGLIYVNPEGPNGNPDPLAAARDIRETFARMAMDDEETVALIAGGHTFGKTHGAGPATHVGPEPEAAGLEEQGLGWKSSFGTGVGGDAITSGLEVIWTTTPTRWSNDFFDHLFGYEWELTTSPAGAHQWRPKAGAGADSVPDPHDPNKRRTPSMLTTDLSLRFDPAYEAISRRFHEHPEQLAEAFSRAWFKLTHRDMGPRARYLGPEVPAEELIWQDPIPAVNHPLIDAQDIQQLKGQILNSGLSVAQLVSTAWASASTFRGSDKRGGANGARIRLAPQKDWEVNQPQQLAQVLQGLEALQSAFNSAQSTGKRVSLADLIVLGGCAAVELAAKNAGYSISVPFAPGRMDASQEQTDVESFAVLEPVADGFRNYLKPVSGITAEALLVDRAQLLTLTAPQLTVLLGGLRVLGANVGQSPHGVFTSRPGTLSNDFFVNLLDMGTQWKPQSEARDLYEGSDRATGQYKWSGTRVDLLLGSNSQLRALAEVYAAADAGEQFVKDFVAAWDKVMNLDRFDLR.

The segment at residues 91-214 (WHSAGTYRIA…LGAVQMGLIY (124 aa)) is a cross-link (tryptophyl-tyrosyl-methioninium (Trp-Tyr) (with M-240)). H92 functions as the Proton acceptor in the catalytic mechanism. Positions 214-240 (YVNPEGPNGNPDPLAAARDIRETFARM) form a cross-link, tryptophyl-tyrosyl-methioninium (Tyr-Met) (with W-91). Position 255 (H255) interacts with heme b. The disordered stretch occupies residues 335–362 (AHQWRPKAGAGADSVPDPHDPNKRRTPS).

It belongs to the peroxidase family. Peroxidase/catalase subfamily. In terms of assembly, homodimer or homotetramer. Heme b serves as cofactor. Post-translationally, formation of the three residue Trp-Tyr-Met cross-link is important for the catalase, but not the peroxidase activity of the enzyme.

It carries out the reaction H2O2 + AH2 = A + 2 H2O. The enzyme catalyses 2 H2O2 = O2 + 2 H2O. Its function is as follows. Bifunctional enzyme with both catalase and broad-spectrum peroxidase activity. This is Catalase-peroxidase from Pseudomonas fluorescens (strain ATCC BAA-477 / NRRL B-23932 / Pf-5).